The primary structure comprises 683 residues: MDAMIGDPMSATSVEAVFEKQPSPEFRELVTPRAMAVAVVLSVVICFVGMRIQMTAGIVPALNMPASILSFFLLKWLIRLLQSCGFPMLPFTRQENMFLLTCIITCLNLALTSGFATNIIGMTSTVARSLADDPDPRDIMDHVPIGKWIVYLFLVGMTGVLINVPFNQVMIIDYKLLFPTGTVIAQLINSFHTPEGAYVAKMQVATIFKVFFGSFSWSMFQWFYTAGDDCGFQHFPTFGLGLYKHRFYFDFSATYIGLGMICPHIVNFGLFFGAIISWGFLYPFLETKRGQWYQTDSPTSLNGQNGYKVFISVTLIITDGMINFLTLITTASINFYQLRKEHDLGLANYFKKHPSLNYDDRKRIEVFLANRIPIPVPVAAYITCAAISTIAIPAMFNQIKFYHLAVLYMVIPVVTFCNTYATGLTDWSVAPTYAKFTTFVFAAWIAKPGAVVASLLASGVIVAALHISSQAMQDLKSGHMTLTSPRAMVTGQIFGVAVGSILCPCVFLAFQSTTKPNAPVGSKQSDYPCPFAGLYRAIGVIGTGGVKELPKHCMTFCVVAFCVTVIIDAVVLVSQKRGWSIHRYIPSMTVIALPFFAGSYFTIDMCVGSLLLLAWTRMNAKSAEMLSSAVAAGLICGEGLFTLPSALLNMFKVQPPMCMKFLSGGEEVEAADSFLNNLGTSRT.

Transmembrane regions (helical) follow at residues 29-49, 58-78, 97-117, 142-162, 204-224, 265-285, 309-329, 372-392, 404-424, 448-468, 490-510, 553-573, 595-615, and 628-648; these read LVTP…CFVG, IVPA…KWLI, MFLL…GFAT, HVPI…GVLI, VATI…QWFY, IVNF…YPFL, VFIS…TLIT, IPIP…TIAI, LAVL…ATGL, PGAV…LHIS, TGQI…FLAF, CMTF…VVLV, FFAG…LLAW, and SAVA…SALL.

It belongs to the YSL (TC 2.A.67.2) family.

It localises to the membrane. Functionally, may be involved in the transport of nicotianamine-chelated metals. In Oryza sativa subsp. japonica (Rice), this protein is Probable metal-nicotianamine transporter YSL3 (YSL3).